The sequence spans 252 residues: MFYGVDLTSRLMLGTAQYPSPQVLLEAIEASGAQVITVSLRREGAAGGAFRALLAKSRCRLLPNTAGCHTVREAVTTARMAREVFGTSWIKLEVIGHADTQQPDPFALVEAARVLCAEGFDVFPYTTEDLIVGEKLLEAGCKVLMPWGAPIGSGQGLRNLAGLRSMRAHFRDVPLVVDAGIGAPSQAAQAMELGFDAVLLNTAVAKAVDPVGMARAFGRAIQAGQEGFVAGLMPERDMASASTPVFGLAELA.

Lysine 91 functions as the Schiff-base intermediate with DXP in the catalytic mechanism. 1-deoxy-D-xylulose 5-phosphate-binding positions include glycine 152, 179–180, and 201–202; these read AG and NT.

This sequence belongs to the ThiG family. Homotetramer. Forms heterodimers with either ThiH or ThiS.

The protein resides in the cytoplasm. It catalyses the reaction [ThiS sulfur-carrier protein]-C-terminal-Gly-aminoethanethioate + 2-iminoacetate + 1-deoxy-D-xylulose 5-phosphate = [ThiS sulfur-carrier protein]-C-terminal Gly-Gly + 2-[(2R,5Z)-2-carboxy-4-methylthiazol-5(2H)-ylidene]ethyl phosphate + 2 H2O + H(+). Its pathway is cofactor biosynthesis; thiamine diphosphate biosynthesis. In terms of biological role, catalyzes the rearrangement of 1-deoxy-D-xylulose 5-phosphate (DXP) to produce the thiazole phosphate moiety of thiamine. Sulfur is provided by the thiocarboxylate moiety of the carrier protein ThiS. In vitro, sulfur can be provided by H(2)S. In Gluconobacter oxydans (strain 621H) (Gluconobacter suboxydans), this protein is Thiazole synthase.